A 341-amino-acid chain; its full sequence is Phosphate acyltransferase (341 aa).

Belongs to the PlsX family. In terms of assembly, homodimer. Probably interacts with PlsY.

The protein localises to the cytoplasm. It carries out the reaction a fatty acyl-[ACP] + phosphate = an acyl phosphate + holo-[ACP]. Its pathway is lipid metabolism; phospholipid metabolism. Its function is as follows. Catalyzes the reversible formation of acyl-phosphate (acyl-PO(4)) from acyl-[acyl-carrier-protein] (acyl-ACP). This enzyme utilizes acyl-ACP as fatty acyl donor, but not acyl-CoA. This chain is Phosphate acyltransferase, found in Pseudoalteromonas atlantica (strain T6c / ATCC BAA-1087).